We begin with the raw amino-acid sequence, 362 residues long: Holliday junction branch migration complex subunit RuvB (362 aa).

The segment at 1–183 (MADSSLVGGG…FGFTGHLEFY (183 aa)) is large ATPase domain (RuvB-L). ATP is bound by residues Leu-22, Arg-23, Gly-64, Lys-67, Thr-68, Thr-69, 130 to 132 (EDF), Arg-173, Tyr-183, and Arg-220. Residue Thr-68 coordinates Mg(2+). Residues 184–254 (SVEELELVLR…TASAALDMYE (71 aa)) are small ATPAse domain (RuvB-S). The interval 257–362 (KRGLDRLDRS…PVAEWLPNGQ (106 aa)) is head domain (RuvB-H). Positions 312 and 317 each coordinate DNA.

This sequence belongs to the RuvB family. As to quaternary structure, homohexamer. Forms an RuvA(8)-RuvB(12)-Holliday junction (HJ) complex. HJ DNA is sandwiched between 2 RuvA tetramers; dsDNA enters through RuvA and exits via RuvB. An RuvB hexamer assembles on each DNA strand where it exits the tetramer. Each RuvB hexamer is contacted by two RuvA subunits (via domain III) on 2 adjacent RuvB subunits; this complex drives branch migration. In the full resolvosome a probable DNA-RuvA(4)-RuvB(12)-RuvC(2) complex forms which resolves the HJ.

Its subcellular location is the cytoplasm. The enzyme catalyses ATP + H2O = ADP + phosphate + H(+). The RuvA-RuvB-RuvC complex processes Holliday junction (HJ) DNA during genetic recombination and DNA repair, while the RuvA-RuvB complex plays an important role in the rescue of blocked DNA replication forks via replication fork reversal (RFR). RuvA specifically binds to HJ cruciform DNA, conferring on it an open structure. The RuvB hexamer acts as an ATP-dependent pump, pulling dsDNA into and through the RuvAB complex. RuvB forms 2 homohexamers on either side of HJ DNA bound by 1 or 2 RuvA tetramers; 4 subunits per hexamer contact DNA at a time. Coordinated motions by a converter formed by DNA-disengaged RuvB subunits stimulates ATP hydrolysis and nucleotide exchange. Immobilization of the converter enables RuvB to convert the ATP-contained energy into a lever motion, pulling 2 nucleotides of DNA out of the RuvA tetramer per ATP hydrolyzed, thus driving DNA branch migration. The RuvB motors rotate together with the DNA substrate, which together with the progressing nucleotide cycle form the mechanistic basis for DNA recombination by continuous HJ branch migration. Branch migration allows RuvC to scan DNA until it finds its consensus sequence, where it cleaves and resolves cruciform DNA. This chain is Holliday junction branch migration complex subunit RuvB, found in Arthrobacter sp. (strain FB24).